Consider the following 72-residue polypeptide: Translation initiation factor IF-1 (72 aa).

Residues 1–72 (MIKEDNIEMH…SKGRIIFRSR (72 aa)) enclose the S1-like domain.

Belongs to the IF-1 family. In terms of assembly, component of the 30S ribosomal translation pre-initiation complex which assembles on the 30S ribosome in the order IF-2 and IF-3, IF-1 and N-formylmethionyl-tRNA(fMet); mRNA recruitment can occur at any time during PIC assembly.

The protein resides in the cytoplasm. Functionally, one of the essential components for the initiation of protein synthesis. Stabilizes the binding of IF-2 and IF-3 on the 30S subunit to which N-formylmethionyl-tRNA(fMet) subsequently binds. Helps modulate mRNA selection, yielding the 30S pre-initiation complex (PIC). Upon addition of the 50S ribosomal subunit IF-1, IF-2 and IF-3 are released leaving the mature 70S translation initiation complex. The chain is Translation initiation factor IF-1 from Blochmanniella floridana.